The chain runs to 189 residues: MRVGLFGGSFNPAHEGHAHVAETAMHRLKLDKVIWLVSPQNPLKSSHETRPLAERMAGVRRWARGGGMIVSDAETRLGSQYTIDTLRVLRARYPGVKFVWIMGADSLATFHRWRGWTQIMREVPVAVISRPWAALKARTSPAARRFAHARWPSSAAAILADATAPAWVYLTGPLNFASSTALRGRQTKG.

The protein belongs to the NadD family.

The catalysed reaction is nicotinate beta-D-ribonucleotide + ATP + H(+) = deamido-NAD(+) + diphosphate. It participates in cofactor biosynthesis; NAD(+) biosynthesis; deamido-NAD(+) from nicotinate D-ribonucleotide: step 1/1. In terms of biological role, catalyzes the reversible adenylation of nicotinate mononucleotide (NaMN) to nicotinic acid adenine dinucleotide (NaAD). This is Probable nicotinate-nucleotide adenylyltransferase from Caulobacter sp. (strain K31).